Consider the following 298-residue polypeptide: Protein FAM221A (298 aa).

Polar residues predominate over residues 241–257; the sequence is SSPETLTDVGTSSQVSS. Residues 241 to 263 are disordered; sequence SSPETLTDVGTSSQVSSLRRPEE.

This sequence belongs to the FAM221 family.

The polypeptide is Protein FAM221A (FAM221A) (Homo sapiens (Human)).